A 202-amino-acid chain; its full sequence is Imidazoleglycerol-phosphate dehydratase (202 aa).

Belongs to the imidazoleglycerol-phosphate dehydratase family.

Its subcellular location is the cytoplasm. The enzyme catalyses D-erythro-1-(imidazol-4-yl)glycerol 3-phosphate = 3-(imidazol-4-yl)-2-oxopropyl phosphate + H2O. It participates in amino-acid biosynthesis; L-histidine biosynthesis; L-histidine from 5-phospho-alpha-D-ribose 1-diphosphate: step 6/9. The chain is Imidazoleglycerol-phosphate dehydratase from Lactococcus lactis subsp. cremoris (strain SK11).